A 275-amino-acid chain; its full sequence is MDLLKTPSSTVGLSETFARLKSQGKVALIPYITAGDPDLSTTAKALKVLDSCGSDIIELGVPYSDPLADGPAIQAAARRSLLKGTNFNSIISMLKEVIPQLSCPIALFTYYNPILRRGVENYMTVIKNAGVHGLLVPDVPLEETETLRNEARKHQIELVLLTTPTTPKERMNAIVEASEGFIYLVSSVGVTGTRESVNEKVQSLLQQIKEATSKPVAVGFGISKPEHVKQVAEWGADGVIVGSAMVKILGESESPEQGLKELEFFTKSLKSALVS.

Residues glutamate 58 and aspartate 69 each act as proton acceptor in the active site.

Belongs to the TrpA family. Tetramer of two alpha and two beta chains. In terms of tissue distribution, ubiquitously expressed at low levels in seedlings, roots, hypocotyls, cotyledons, stems, leaves, inflorescences, flowers, siliques and seeds.

It is found in the cytoplasm. The catalysed reaction is (1S,2R)-1-C-(indol-3-yl)glycerol 3-phosphate + L-serine = D-glyceraldehyde 3-phosphate + L-tryptophan + H2O. The enzyme catalyses (1S,2R)-1-C-(indol-3-yl)glycerol 3-phosphate = indole + D-glyceraldehyde 3-phosphate. The protein operates within amino-acid biosynthesis; L-tryptophan biosynthesis; L-tryptophan from chorismate: step 5/5. The alpha subunit is responsible for the aldol cleavage of indoleglycerol phosphate to indole and glyceraldehyde 3-phosphate. Contributes to the tryptophan-independent indole biosynthesis, and possibly to auxin production. The polypeptide is Tryptophan synthase alpha chain (TRPA1) (Arabidopsis thaliana (Mouse-ear cress)).